Consider the following 333-residue polypeptide: Glycogenin-1 (333 aa).

Thr-2 bears the N-acetylthreonine mark. UDP contacts are provided by Leu-9, Thr-11, Asn-12, and Tyr-15. UDP-alpha-D-glucose contacts are provided by Leu-9, Thr-11, Asn-12, and Tyr-15. Phosphoserine is present on Ser-44. Arg-77 serves as a coordination point for UDP. UDP-alpha-D-glucose contacts are provided by Arg-77, Lys-86, Asp-102, Ala-103, Asp-104, Asn-133, Ser-134, Asp-160, Asp-163, and Gln-164. UDP contacts are provided by Asp-102, Ala-103, and Asp-104. Asp-102 provides a ligand contact to Mn(2+). A Mn(2+)-binding site is contributed by Asp-104. An O-linked (Glc...) tyrosine glycan is attached at Tyr-195. UDP contacts are provided by His-212, Gly-215, and Lys-218. His-212 contributes to the Mn(2+) binding site. Positions 215 and 218 each coordinate UDP-alpha-D-glucose. Residues 284-316 (SDLSFGEAPAAPQPSMSSEERKERWEQGQADYM) are interaction with GYS1. The interval 290–316 (EAPAAPQPSMSSEERKERWEQGQADYM) is disordered.

This sequence belongs to the glycosyltransferase 8 family. Glycogenin subfamily. In terms of assembly, part of the GYS1-GYG1 complex, a heterooctamer composed of a tetramer of GYS1 and 2 dimers of GYG1, where each GYS1 protomer binds to one GYG1 subunit (via GYG1 C-terminus); the GYS1 tetramer may dissociate from GYG1 dimers to continue glycogen polymerization on its own. May also form a heterooctamer complex with GYS2. Mn(2+) is required as a cofactor. Self-glycosylated by the transfer of glucose residues from UDP-glucose to itself, forming an alpha-1,4-glycan of around 10 residues attached to Tyr-195. In terms of processing, phosphorylated. In terms of tissue distribution, skeletal muscle, heart, to a lesser extent in kidney, lung and brain.

It is found in the cytoplasm. The protein localises to the nucleus. The catalysed reaction is L-tyrosyl-[glycogenin] + UDP-alpha-D-glucose = alpha-D-glucosyl-L-tyrosyl-[glycogenin] + UDP + H(+). It carries out the reaction [1,4-alpha-D-glucosyl](n)-L-tyrosyl-[glycogenin] + UDP-alpha-D-glucose = [1,4-alpha-D-glucosyl](n+1)-L-tyrosyl-[glycogenin] + UDP + H(+). Its pathway is glycan biosynthesis; glycogen biosynthesis. Glycogenin participates in the glycogen biosynthetic process along with glycogen synthase and glycogen branching enzyme. It catalyzes the formation of a short alpha (1,4)-glucosyl chain covalently attached via a glucose 1-O-tyrosyl linkage to internal tyrosine residues and these chains act as primers for the elongation reaction catalyzed by glycogen synthase. This Mus musculus (Mouse) protein is Glycogenin-1.